Here is a 259-residue protein sequence, read N- to C-terminus: Global transcriptional regulator CodY (259 aa).

The GAF domain stretch occupies residues 1-155 (MDLLSKTRRI…GATVVGMEIL (155 aa)). A DNA-binding region (H-T-H motif) is located at residues 203–222 (ASKIADRVGITRSVIVNALR).

This sequence belongs to the CodY family.

It is found in the cytoplasm. In terms of biological role, DNA-binding global transcriptional regulator which is involved in the adaptive response to starvation and acts by directly or indirectly controlling the expression of numerous genes in response to nutrient availability. During rapid exponential growth, CodY is highly active and represses genes whose products allow adaptation to nutrient depletion. The chain is Global transcriptional regulator CodY from Brevibacillus brevis (strain 47 / JCM 6285 / NBRC 100599).